A 126-amino-acid polypeptide reads, in one-letter code: Large ribosomal subunit protein uL22 (126 aa).

The protein belongs to the universal ribosomal protein uL22 family. As to quaternary structure, part of the 50S ribosomal subunit.

This protein binds specifically to 23S rRNA; its binding is stimulated by other ribosomal proteins, e.g. L4, L17, and L20. It is important during the early stages of 50S assembly. It makes multiple contacts with different domains of the 23S rRNA in the assembled 50S subunit and ribosome. In terms of biological role, the globular domain of the protein is located near the polypeptide exit tunnel on the outside of the subunit, while an extended beta-hairpin is found that lines the wall of the exit tunnel in the center of the 70S ribosome. This Cereibacter sphaeroides (strain ATCC 17029 / ATH 2.4.9) (Rhodobacter sphaeroides) protein is Large ribosomal subunit protein uL22.